A 104-amino-acid chain; its full sequence is Large ribosomal subunit protein bL21 (104 aa).

The protein belongs to the bacterial ribosomal protein bL21 family. As to quaternary structure, part of the 50S ribosomal subunit. Contacts protein L20.

Functionally, this protein binds to 23S rRNA in the presence of protein L20. This is Large ribosomal subunit protein bL21 from Opitutus terrae (strain DSM 11246 / JCM 15787 / PB90-1).